Reading from the N-terminus, the 332-residue chain is Glycerol-3-phosphate dehydrogenase [NAD(P)+] (332 aa).

NADPH-binding residues include Trp-11, Arg-30, and Lys-108. Sn-glycerol 3-phosphate-binding residues include Lys-108, Gly-137, and Ser-139. Ala-141 provides a ligand contact to NADPH. Sn-glycerol 3-phosphate contacts are provided by Lys-192, Asp-245, Ser-255, Arg-256, and Asn-257. The Proton acceptor role is filled by Lys-192. Arg-256 is an NADPH binding site. NADPH-binding residues include Val-280 and Glu-282.

It belongs to the NAD-dependent glycerol-3-phosphate dehydrogenase family.

It is found in the cytoplasm. The catalysed reaction is sn-glycerol 3-phosphate + NAD(+) = dihydroxyacetone phosphate + NADH + H(+). It carries out the reaction sn-glycerol 3-phosphate + NADP(+) = dihydroxyacetone phosphate + NADPH + H(+). Its pathway is membrane lipid metabolism; glycerophospholipid metabolism. Catalyzes the reduction of the glycolytic intermediate dihydroxyacetone phosphate (DHAP) to sn-glycerol 3-phosphate (G3P), the key precursor for phospholipid synthesis. This Burkholderia mallei (strain ATCC 23344) protein is Glycerol-3-phosphate dehydrogenase [NAD(P)+].